We begin with the raw amino-acid sequence, 203 residues long: GTP-binding protein YPTC1 (203 aa).

GTP is bound by residues 15–23, 33–40, 63–67, 121–124, and 151–153; these read GDSGVGKSC, YTESYIST, DTAGQ, NKSD, and SAK. The short motif at 37 to 45 is the Effector region element; it reads YISTIGVDF. Residues 174–203 are disordered; the sequence is ASQPIPTKAGGPVVRPQEGKPINSKSSSCC. Residues Cys-202 and Cys-203 are each lipidated (S-geranylgeranyl cysteine).

Belongs to the small GTPase superfamily. Rab family.

The protein localises to the cell membrane. Its function is as follows. Protein transport. Probably involved in vesicular traffic. The chain is GTP-binding protein YPTC1 (YPTC1) from Chlamydomonas reinhardtii (Chlamydomonas smithii).